The following is a 429-amino-acid chain: Glutamate-1-semialdehyde 2,1-aminomutase (429 aa).

The residue at position 265 (lysine 265) is an N6-(pyridoxal phosphate)lysine.

It belongs to the class-III pyridoxal-phosphate-dependent aminotransferase family. HemL subfamily. As to quaternary structure, homodimer. It depends on pyridoxal 5'-phosphate as a cofactor.

Its subcellular location is the cytoplasm. It carries out the reaction (S)-4-amino-5-oxopentanoate = 5-aminolevulinate. The protein operates within porphyrin-containing compound metabolism; protoporphyrin-IX biosynthesis; 5-aminolevulinate from L-glutamyl-tRNA(Glu): step 2/2. In Acidobacterium capsulatum (strain ATCC 51196 / DSM 11244 / BCRC 80197 / JCM 7670 / NBRC 15755 / NCIMB 13165 / 161), this protein is Glutamate-1-semialdehyde 2,1-aminomutase.